The sequence spans 190 residues: Movement protein TGB3 (190 aa).

Topologically, residues 1–52 are cytoplasmic; that stretch reads MDPPVILHSPNCSCQFCSSELPSTHTCGSQDRTVPLHVEATAAGHMEAKNFS. A helical membrane pass occupies residues 53–73; it reads LQYVLLVAFVSVLLGFSFCVY. At 74–166 the chain is on the lumenal side; the sequence is LKSMSNDEAS…TPCENNVLLK (93 aa). A phosphotyrosine mark is found at Y89 and Y120. The short motif at 89–93 is the Involved in plasmodesmata targeting and virus cell-to-cell movement element; the sequence is YQDLN. The helical transmembrane segment at 167 to 187 threads the bilayer; sequence LWKDDLSFTIIAVTVLVGAML. Topologically, residues 188 to 190 are cytoplasmic; that stretch reads ARC.

The protein belongs to the virgaviridae TGB3 movement protein family. Interacts with movement protein TGB2. TGB1-TGB3-TGB2 complex formation is enhanced by ATP hydrolysis.

Its subcellular location is the host cell junction. It is found in the host plasmodesma. It localises to the host endoplasmic reticulum membrane. The protein localises to the host cytoplasm. The protein resides in the host cytoskeleton. Participates in the transport of viral genome to neighboring plant cells directly through plasmodesmata, without any budding. TGBp2 and TGBp3 are necessary for intracellular delivery of TGBp1-containing vRNPs to plasmodesmata. Can gate plasmodesmata and increase their size exclusion limit. Induces host actin cytoskeleton network thickening, which probably plays a major role in virus cell-to-cell movement. This Solanum nigrum (Black nightshade) protein is Movement protein TGB3.